The following is a 370-amino-acid chain: Aminomethyltransferase (370 aa).

It belongs to the GcvT family. In terms of assembly, the glycine cleavage system is composed of four proteins: P, T, L and H.

The enzyme catalyses N(6)-[(R)-S(8)-aminomethyldihydrolipoyl]-L-lysyl-[protein] + (6S)-5,6,7,8-tetrahydrofolate = N(6)-[(R)-dihydrolipoyl]-L-lysyl-[protein] + (6R)-5,10-methylene-5,6,7,8-tetrahydrofolate + NH4(+). Functionally, the glycine cleavage system catalyzes the degradation of glycine. The chain is Aminomethyltransferase from Clostridium botulinum (strain Langeland / NCTC 10281 / Type F).